The chain runs to 137 residues: Large ribosomal subunit protein uL16 (137 aa).

The segment covering Met-1–Gln-13 has biased composition (basic residues). The tract at residues Met-1–Thr-22 is disordered.

The protein belongs to the universal ribosomal protein uL16 family. As to quaternary structure, part of the 50S ribosomal subunit.

Binds 23S rRNA and is also seen to make contacts with the A and possibly P site tRNAs. The sequence is that of Large ribosomal subunit protein uL16 from Azoarcus sp. (strain BH72).